The sequence spans 135 residues: Small ribosomal subunit protein bS16 (135 aa).

Residues 94–135 (IGTEMETWQQRNDSRLKRGLDRKAIRRKRKKEAEAKEKESAG) form a disordered region. Basic and acidic residues-rich tracts occupy residues 105 to 116 (NDSRLKRGLDRK) and 124 to 135 (KEAEAKEKESAG).

It belongs to the bacterial ribosomal protein bS16 family.

The protein is Small ribosomal subunit protein bS16 of Chloroherpeton thalassium (strain ATCC 35110 / GB-78).